The chain runs to 92 residues: SPbeta prophage-derived DNA-binding protein HU 2 (92 aa).

A Phosphothreonine modification is found at Thr4. The interval 55–77 (RAARKGRNPQTGEEIDIPATKAP) is disordered.

Belongs to the bacterial histone-like protein family. Homodimer.

In terms of biological role, histone-like DNA-binding protein which is capable of wrapping DNA to stabilize it, and thus to prevent its denaturation under extreme environmental conditions. The polypeptide is SPbeta prophage-derived DNA-binding protein HU 2 (hup2) (Bacillus subtilis (strain 168)).